The sequence spans 628 residues: Hepatocyte nuclear factor 1-alpha (628 aa).

Residues 1 to 31 are dimerization; it reads MVSKLSQLQTELLAALLESGLSKEALIQALG. One can recognise an HNF-p1 domain in the interval 1-32; sequence MVSKLSQLQTELLAALLESGLSKEALIQALGE. The segment at 47 to 79 is disordered; it reads GESCGGTRGDLTELPNGLGETRGSEDDTDDDGE. Serine 70 bears the Phosphoserine mark. Phosphothreonine is present on threonine 74. Positions 87–182 constitute a POU-specific atypical domain; the sequence is KELENLSPEE…VAQQFTHAGQ (96 aa). Phosphoserine is present on serine 93. Lysine 117 is covalently cross-linked (Glycyl lysine isopeptide (Lys-Gly) (interchain with G-Cter in ubiquitin)). 4 interaction with DNA regions span residues 130-132, 143-149, 155-158, and 203-206; these read QRE, HLSQHLN, KTQK, and RFKW. A disordered region spans residues 183 to 205; sequence GGLIEEPTGDELPTKKGRRNRFK. A Nuclear localization signal motif is present at residues 197–205; it reads KKGRRNRFK. A DNA-binding region (homeobox; HNF1-type) is located at residues 199-279; it reads GRRNRFKWGP…NRRKEEAFRH (81 aa). The residue at position 247 (serine 247) is a Phosphoserine. Interaction with DNA regions lie at residues 263–265 and 270–273; these read RVY and NRRK. Disordered regions lie at residues 284–338 and 541–585; these read DTYN…SSSG and FTSD…LSTS. Pro residues predominate over residues 288-298; it reads GPPPGPGPGPA. Residue serine 313 is modified to Phosphoserine. Composition is skewed to polar residues over residues 324–338 and 558–575; these read QSAT…SSSG and SPAT…NIQH.

This sequence belongs to the HNF1 homeobox family. In terms of assembly, binds DNA as a dimer. Heterotetramer with PCBD1; formed by a dimer of dimers. Interacts with PCBD1. Interacts with BHLHE41. Interacts with NR5A2. Interacts with SPOP; this interaction promotes ubiquitination and degradation of HNF1A. In terms of processing, ubiquitinated in s SPOP-dependent manner; leading to prteasomal degradation. In terms of tissue distribution, liver.

The protein resides in the nucleus. Its function is as follows. Transcriptional activator that regulates the tissue specific expression of multiple genes, especially in pancreatic islet cells and in liver. Binds to the inverted palindrome 5'-GTTAATNATTAAC-3'. Activates the transcription of CYP1A2, CYP2E1 and CYP3A11. This chain is Hepatocyte nuclear factor 1-alpha (Hnf1a), found in Rattus norvegicus (Rat).